Reading from the N-terminus, the 250-residue chain is Bacteriorhodopsin-I (250 aa).

Transmembrane regions (helical) follow at residues 7–27 (EGIWLWLGTAGMFLGMLYFIA), 42–62 (IATILITAIAFVNYLAMALGF), 81–101 (YTDWLFTTPLLLYDLGLLAGA), 114–134 (VLMIGTGVVATLSAGSGVLSA), 139–159 (LVWWGISTAFLLVLLYFLFSS), 185–205 (VWLVYPVWWLVGSEGLGLVGI), and 207–227 (IETAGFMVIDLVAKVGFGIIL). Position 220 is an N6-(retinylidene)lysine (K220).

It belongs to the archaeal/bacterial/fungal opsin family. In terms of processing, the covalent binding of retinal to the apoprotein, bacterioopsin, generates bacteriorhodopsin.

Its subcellular location is the membrane. Functionally, light-driven proton pump. In Haloarcula marismortui (strain ATCC 43049 / DSM 3752 / JCM 8966 / VKM B-1809) (Halobacterium marismortui), this protein is Bacteriorhodopsin-I (bop).